The following is a 115-amino-acid chain: Migration and invasion enhancer 1 (115 aa).

The span at 1 to 10 shows a compositional bias: polar residues; the sequence is MSGDTGTTSV. The interval 1 to 22 is disordered; the sequence is MSGDTGTTSVAPPPGETEPGHG. At Ser2 the chain carries N-acetylserine. Cys30 and Cys33 are disulfide-bonded. A lipid anchor (S-geranylgeranyl cysteine) is attached at Cys112. Residues 113 to 115 constitute a propeptide, removed in mature form; sequence VIL.

Belongs to the SelWTH family. Interacts with GPX1. In terms of processing, isoprenylation facilitates association with the plasma membrane and enhances the migratory phenotype of cells by inducing increased filopodia formation.

The protein localises to the cytoplasm. The protein resides in the cytosol. Its subcellular location is the cell membrane. In terms of biological role, increases cell migration by inducing filopodia formation at the leading edge of migrating cells. Plays a role in regulation of apoptosis, possibly through control of CASP3. May be involved in a redox-related process. The polypeptide is Migration and invasion enhancer 1 (MIEN1) (Bos taurus (Bovine)).